Here is a 148-residue protein sequence, read N- to C-terminus: FAD synthase (148 aa).

Residues Thr5–Phe6, His10–His13, Asp92, and Tyr119 contribute to the ATP site.

The protein belongs to the archaeal FAD synthase family. As to quaternary structure, homodimer. The cofactor is a divalent metal cation.

It carries out the reaction FMN + ATP + H(+) = FAD + diphosphate. Its pathway is cofactor biosynthesis; FAD biosynthesis; FAD from FMN: step 1/1. In terms of biological role, catalyzes the transfer of the AMP portion of ATP to flavin mononucleotide (FMN) to produce flavin adenine dinucleotide (FAD) coenzyme. In Methanosphaera stadtmanae (strain ATCC 43021 / DSM 3091 / JCM 11832 / MCB-3), this protein is FAD synthase.